The following is a 1887-amino-acid chain: MAARGRGLLLLTLSVLLAAGPSAAAAKLNIPKVLLPFTRATRVNFTLEASEGCYRWLSTRPEVASIEPLGLDEQQCSQKAVVQARLTQPARLTSIIFAEDITTGQVLRCDAIVDLIHDIQIVSTTRELYLEDSPLELKIQALDSEGNTFSTLAGLVFEWTIVKDSEADRFSDSHNALRILTFLESTYIPPSYISEMEKAAKQGDTILVSGMKTGSSKLKARIQEAVYKNVRPAEVRLLILENILLNPAYDVYLMVGTSIHYKVQKIRQGKITELSMPSDQYELQLQNSIPGPEGDPARPVAVLAQDTSMVTALQLGQSSLVLGHRSIRMQGASRLPNSTIYVVEPGYLGFTVHPGDRWVLETGRLYEITIEVFDKFSNKVYVSDNIRIETVLPAEFFEVLSSSQNGSYHRIRALKRGQTAIDAALTSVVDQDGGVHILQVPVWNQQEVEIHIPITLYPSILTFPWQPKTGAYQYTIRAHGGSGNFSWSSSSHLVATVTVKGVMTTGSDIGFSVIQAHDVQNPLHFGEMKVYVIEPHSMEFAPCQVEARVGQALELPLRISGLMPGGASEVVTLSDCSHFDLAVEVENQGVFQPLPGRLPPGSEHCSGIRVKAEAQGSTTLLVSYRHGHVHLSAKITIAAYLPLKAVDPSSVALVTLGSSKEMLFEGGPRPWILEPSKFFQNVTAEDTDSIGLALFAPHSSRNYQQHWILVTCQALGEQVIALSVGNKPSLTNPFPAVEPAVVKFVCAPPSRLTLAPVYTSPQLDMSCPLLQQNKQVVPVSSHRNPRLDLAAYDQEGRRFDNFSSLSIQWESTRPVLASIEPELPMQLVSQDDESGQKKLHGLQAILVHEASGTTAITATATGYQESHLSSARTKQPHDPLVPLSASIELILVEDVRVSPEEVTIYNHPGIQAELRIREGSGYFFLNTSTADVVKVAYQEARGVAMVHPLLPGSSTIMIHDLCLVFPAPAKAVVYVSDIQELYIRVVDKVEIGKTVKAYVRVLDLHKKPFLAKYFPFMDLKLRAASPIITLVALDEALDNYTITFLIRGVAIGQTSLTASVTNKAGQRINSAPQQIEVFPPFRLMPRKVTLLIGATMQVTSEGGPQPQSNILFSISNESVALVSAAGLVQGLAIGNGTVSGLVQAVDAETGKVVIISQDLVQVEVLLLRAVRIRAPIMRMRTGTQMPIYVTGITNHQNPFSFGNAVPGLTFHWSVTKRDVLDLRGRHHEASIRLPSQYNFAMNVLGRVKGRTGLRVVVKAVDPTSGQLYGLARELSDEIQVQVFEKLQLLNPEIEAEQILMSPNSYIKLQTNRDGAASLSYRVLDGPEKVPVVHVDEKGFLASGSMIGTSTIEVIAQEPFGANQTIIVAVKVSPVSYLRVSMSPVLHTQNKEALVAVPLGMTVTFTVHFHDNSGDVFHAHSSVLNFATNRDDFVQIGKGPTNNTCVVRTVSVGLTLLRVWDAEHPGLSDFMPLPVLQAISPELSGAMVVGDVLCLATVLTSLEGLSGTWSSSANSILHIDPKTGVAVARAVGSVTVYYEVAGHLRTYKEVVVSVPQRIMARHLHPIQTSFQEATASKVIVAVGDRSSNLRGECTPTQREVIQALHPETLISCQSQFKPAVFDFPSQDVFTVEPQFDTALGQYFCSITMHRLTDKQRKHLSMKKTALVVSASLSSSHFSTEQVGAEVPFSPGLFADQAEILLSNHYTSSEIRVFGAPEVLENLEVKSGSPAVLAFAKEKSFGWPSFITYTVGVLDPAAGSQGPLSTTLTFSSPVTNQAIAIPVTVAFVVDRRGPGPYGASLFQHFLDSYQVMFFTLFALLAGTAVMIIAYHTVCTPRDLAVPAALTPRASPGHSPHYFAASSPTSPNALPPARKASPPSGLWSPAYASH.

The N-terminal stretch at Met-1–Ala-26 is a signal peptide. The Perinuclear space portion of the chain corresponds to Lys-27 to Gln-1808. N-linked (GlcNAc...) asparagine glycosylation is found at Asn-44, Asn-337, Asn-405, Asn-484, Asn-681, Asn-801, Asn-926, Asn-1039, Asn-1116, Asn-1135, Asn-1362, and Asn-1441. Positions Phe-1078–Lys-1151 constitute a BIG2 domain. Residues Val-1809–His-1829 form a helical membrane-spanning segment. At Thr-1830–His-1887 the chain is on the cytoplasmic side. A Phosphothreonine modification is found at Thr-1844. The disordered stretch occupies residues Pro-1853 to His-1887. Ser-1874, Ser-1877, Ser-1881, and Ser-1886 each carry phosphoserine.

Belongs to the NUP210 family. Forms dimers and possibly higher-order oligomers. N-glycosylated, but not all potential glycosylation sites may be used. Contains high-mannose type oligosaccharides. Post-translationally, phosphorylated at Ser-1881 in mitosis specifically; not phosphorylated in interphase. As to expression, ubiquitous expression, with highest levels in lung, liver, pancreas, testis, and ovary, intermediate levels in brain, kidney, and spleen, and lowest levels in heart and skeletal muscle.

It is found in the nucleus. The protein localises to the nuclear pore complex. It localises to the nucleus membrane. Its subcellular location is the endoplasmic reticulum membrane. Functionally, nucleoporin essential for nuclear pore assembly and fusion, nuclear pore spacing, as well as structural integrity. The sequence is that of Nuclear pore membrane glycoprotein 210 (NUP210) from Homo sapiens (Human).